A 633-amino-acid polypeptide reads, in one-letter code: Guanylate-binding protein 6 (633 aa).

A GTPase domain (Globular) region spans residues 1-310 (MESGPKMLAP…EAINSGAVPC (310 aa)). In terms of domain architecture, GB1/RHD3-type G spans 35–277 (SQPVVVVAIV…FCSYIFTHAR (243 aa)). Residues 45–52 (GLYRTGKS), 67–69 (LGS), and 97–101 (DTEGL) each bind GTP.

Belongs to the TRAFAC class dynamin-like GTPase superfamily. GB1/RHD3 GTPase family. GB1 subfamily. Post-translationally, (Microbial infection) Ubiquitinated by S.flexneri IpaH9.8, leading to its degradation by the proteasome, thereby preventing its ability to promote host defense against bacterial infection.

The protein localises to the cytoplasmic vesicle. The catalysed reaction is GTP + H2O = GDP + phosphate + H(+). Its function is as follows. Interferon (IFN)-inducible GTPase that plays important roles in innate immunity against a diverse range of bacterial, viral and protozoan pathogens, such as bacterial pathogens Listeria monocytogenes and Mycobacterium bovis BCG as well as the protozoan pathogen Toxoplasma gondii. Confers protection to several pathogens, including the bacterial pathogens Listeria monocytogenes and Mycobacterium bovis BCG as well as the protozoan pathogen Toxoplasma gondii. The sequence is that of Guanylate-binding protein 6 (GBP6) from Homo sapiens (Human).